The chain runs to 367 residues: MSDNSQKKVIVGMSGGVDSSVTAYLLQQQGYQVAGLFMKNWEEDDDEEYCSAATDLADAQAVCDKLGIELHTVNFAAEYWDNVFELFLEEYKAGRTPNPDILCNKEIKFKAFLEFAAEDLGADFIATGHYVRRQDVDSKSRLLRGVDGNKDQSYFLYTLSHEQVAQSLFPVGELEKPEVRRIAEQLELVTAKKKDSTGICFIGERKFRDFLGRYLPAQPGPIVSVDGQTVGEHQGLMYHTLGQRKGLGIGGMKDSSEDPWYVVDKDVANNVLVVAQGHEHPRLMSVGLIAQQLHWVDRLPLSGPFRCTVKTRYRQQDIPCTVTPLDEQRIEVRFDEPVAAVTPGQSAVFYQDEICLGGGIIEQRLQE.

ATP-binding positions include 12–19 (GMSGGVDS) and M38. Residues 98–100 (NPD) are interaction with target base in tRNA. The active-site Nucleophile is the C103. Residues C103 and C200 are joined by a disulfide bond. G128 contacts ATP. An interaction with tRNA region spans residues 150 to 152 (KDQ). C200 (cysteine persulfide intermediate) is an active-site residue. Residues 312 to 313 (RY) form an interaction with tRNA region.

It belongs to the MnmA/TRMU family. As to quaternary structure, interacts with TusE.

It localises to the cytoplasm. The enzyme catalyses S-sulfanyl-L-cysteinyl-[protein] + uridine(34) in tRNA + AH2 + ATP = 2-thiouridine(34) in tRNA + L-cysteinyl-[protein] + A + AMP + diphosphate + H(+). Catalyzes the 2-thiolation of uridine at the wobble position (U34) of tRNA(Lys), tRNA(Glu) and tRNA(Gln), leading to the formation of s(2)U34, the first step of tRNA-mnm(5)s(2)U34 synthesis. Sulfur is provided by IscS, via a sulfur-relay system. Binds ATP and its substrate tRNAs. This Serratia proteamaculans (strain 568) protein is tRNA-specific 2-thiouridylase MnmA.